The chain runs to 455 residues: Epoxide hydrolase 1 (455 aa).

The chain crosses the membrane as a helical; Signal-anchor for type III membrane protein span at residues 1–21 (MLLELLLASVLGFVIYWFVSG). Topologically, residues 22-455 (DKEESLPLED…CKFVGLVERQ (434 aa)) are cytoplasmic. Asp-226 serves as the catalytic Nucleophile. Dimethylated arginine is present on Arg-295. Tyr-374 (proton donor) is an active-site residue. His-431 serves as the catalytic Proton acceptor.

Belongs to the peptidase S33 family.

It localises to the microsome membrane. It is found in the endoplasmic reticulum membrane. The enzyme catalyses cis-stilbene oxide + H2O = (1R,2R)-hydrobenzoin. It carries out the reaction 1-(4-methoxyphenyl)-N-methyl-N-[(3-methyloxetan-3-yl)methyl]methanamine + H2O = 2-{[(4-methoxybenzyl)(methyl)amino]methyl}-2-methylpropane-1,3-diol. It catalyses the reaction 8,9-epoxy-(5Z,11Z,14Z)-eicosatrienoate + H2O = 8,9-dihydroxy-(5Z,11Z,14Z)-eicosatrienoate. The catalysed reaction is 11,12-epoxy-(5Z,8Z,14Z)-eicosatrienoate + H2O = 11,12-dihydroxy-(5Z,8Z,14Z)-eicosatrienoate. The enzyme catalyses 2-(5Z,8Z,11Z,14Z-eicosatetraenoyl)-glycerol + H2O = glycerol + (5Z,8Z,11Z,14Z)-eicosatetraenoate + H(+). Inhibited by 10-hydroxystearamide and methoxy-arachidonyl fluorophosphate. In terms of biological role, biotransformation enzyme that catalyzes the hydrolysis of arene and aliphatic epoxides to less reactive and more water soluble dihydrodiols by the trans addition of water. May play a role in the metabolism of endogenous lipids such as epoxide-containing fatty acids. Metabolizes the abundant endocannabinoid 2-arachidonoylglycerol (2-AG) to free arachidonic acid (AA) and glycerol. Binds 20(S)-hydroxycholesterol (20(S)-OHC). The protein is Epoxide hydrolase 1 (EPHX1) of Oryctolagus cuniculus (Rabbit).